Consider the following 971-residue polypeptide: MEEKQKSLSPPPCPSTVTVRRNPPRRARATPFTTTTKPPLSSLACAKPHDVPTFPIDEILSIQIPQSEPKPAIAESLKIFLRIKPLRTFTKVTTTTKSRPRNVWPQNPSKKNNAKENRNPEITKKVRKKDEEACITLNDSYSVTLTPPQSLQELKRSKTEVYEGFSHVFPADCSQNDVYDKMVQPLLEDFMKGKSGMLAALGPSGSGKTHTVFGSLKDPGIVPITLRQIFKKNDESCSGSLRSFNLSIFEICSERGKGEKAYDLLGGESSELSVQQSTIRGLKEVPIQNLEEAESLIGQAMLKRATATTNSNSQSSRSQCIINIRASCNGFSNETKLQSSDAMLTIVDLAGAEREKRTGNQAIDFGLPGTDPYFILFLMPTIPLTMNTRYLLAVTVGVPEEPKEGIAETSSKFFGSLTRYLRDYLEGKKRMALILTVKAGEEDYLDTSYLLRQASPYMKIKFDNTEEPCNKRQLKTFPRAEKNKKIKLSAPKTSQIEENFQGERCQISQEVNLQGKKADPTDRSSPRLEHVAQDKNEREHIIMRNFSKVLWNVLKQCNEKLKVAEGEIFTLKDSLRREQLKSLGLETELISLKSSCLAQPCIPEVEVIVNAKEHFEVDAALTNERNVDDDSCNLIKARREAGAEESSETPVPKVVRNVDDDSCNLIKARREAGAEESSESPVLSVLRNVDDDSCNLIEARREAGSEESSKSPVPNVRNVDVDSCNLINPRREASTEESSESPVLSKNVKDAELVPCHLSSENDAEPRQSVNSEENVGIPSTITHVEAEVTDFQRDQNQDDPTPSPEQVEVSQDCINSGLSNVQTKSAISRRFPDSEKQERNRRLLPASSRSLTEEMNDLEIKDIQTEKQQVKTTNTRVQKKAVSIQGQETEVPPREAEPASTKKQKNGQKPKRRLQPASSVLLTREINTLEIEDDIAEPKVNRGGKKTTVSQPRSQGSVTLLRLLTNNLHL.

Disordered regions lie at residues 1 to 44 (MEEK…SSLA) and 93 to 121 (TTTT…RNPE). Residues 29–39 (ATPFTTTTKPP) show a composition bias toward low complexity. The Kinesin motor domain occupies 76-460 (SLKIFLRIKP…LRQASPYMKI (385 aa)). 202-209 (GPSGSGKT) lines the ATP pocket. Residues 700-709 (RREAGSEESS) are compositionally biased toward basic and acidic residues. Disordered regions lie at residues 700-856 (RREA…TEEM) and 872-917 (KTTN…RLQP). Polar residues predominate over residues 768 to 783 (QSVNSEENVGIPSTIT). Positions 785 to 797 (VEAEVTDFQRDQN) are enriched in basic and acidic residues. Over residues 809-827 (EVSQDCINSGLSNVQTKSA) the composition is skewed to polar residues. Residues 831-842 (RFPDSEKQERNR) are compositionally biased toward basic and acidic residues. The segment covering 903 to 915 (KKQKNGQKPKRRL) has biased composition (basic residues).

It belongs to the TRAFAC class myosin-kinesin ATPase superfamily. Kinesin family. KIN-6 subfamily.

The chain is Kinesin-like protein KIN-6 from Arabidopsis thaliana (Mouse-ear cress).